The following is a 1733-amino-acid chain: Gag-Pol polyprotein (1733 aa).

The N-myristoyl glycine; by host moiety is linked to residue Gly-2. Residues 109-112 (PSAP) carry the PTAP/PSAP motif motif. Residues 112 to 121 (PSLLPEPPLS) are compositionally biased toward pro residues. Disordered stretches follow at residues 112 to 196 (PSLL…ASRL) and 202 to 221 (LPVA…GGNG). The short motif at 128 to 132 (LYPAL) is the LYPX(n)L motif element. Pro residues predominate over residues 159–170 (DPPPYRDPGPPP). Residues 160–163 (PPPY) carry the PPXY motif motif. Phosphoserine; by host is present on Ser-190. An interaction with host PIAS4 region spans residues 343 to 391 (GRSPTNLAKVKGITQGPNESPSAFLERLKEAYRRYTPYDPEDPGQETNV). The interaction with host UBE2I stretch occupies residues 428–433 (IFNKRE). Basic and acidic residues-rich tracts occupy residues 432-464 (RETP…EKER) and 484-496 (KQDR…RRPQ). Disordered stretches follow at residues 432 to 496 (RETP…RRPQ) and 511 to 550 (WAKD…EPRI). The stretch at 436 to 476 (EEREERIKRETEEKEERRRAEDEQKEKERDRRRHREMSKLL) forms a coiled coil. Residues 500–517 (DQCAYCKEKGHWAKDCPK) form a CCHC-type zinc finger. Residues 559–629 (VTFLVDTGAQ…CPYPLLGRDL (71 aa)) form the Peptidase A2 domain. Asp-564 acts as the Protease; shared with dimeric partner in catalysis. Positions 739–930 (LDQGILVPCQ…KQVKYLGYLL (192 aa)) constitute a Reverse transcriptase domain. Residues Asp-807, Asp-881, Asp-882, Asp-1181, Glu-1219, Asp-1240, and Asp-1310 each contribute to the Mg(2+) site. One can recognise an RNase H type-1 domain in the interval 1172 to 1318 (PDADHTWYTD…ADQAAREVAT (147 aa)). Residues 1385-1425 (HQLTHLSFSKTKALLERSPSPYYMLNRDRTLKNITETCKAC) form an HHCC-type zinc finger. One can recognise an Integrase catalytic domain in the interval 1442-1600 (RGHRPGTHWE…TPYEILYGAP (159 aa)). Positions 1453 and 1512 each coordinate Mg(2+).

Homohexamer; further associates as homomultimer. The virus core is composed of a lattice formed from hexagonal rings, each containing six capsid monomers. Interacts with mouse UBE2I and mouse PIAS4. In terms of assembly, interacts (via PPXY motif) with host NEDD4. Interacts (via PSAP motif) with host TSG101. Interacts (via LYPX(n)L motif) with host PDCD6IP. As to quaternary structure, the reverse transcriptase is a monomer (Potential). Interacts (via RNase domains) with host release factor ETF1; this interaction is essential for translational readthrough of amber codon between viral gag and pol genes, as well as for viral replication. Homodimer. The cofactor is Mg(2+). In terms of processing, ubiquitinated by ITCH. Gag can recruit the ubiquitin ligase Itch in an L domain-independent manner to facilitate virus release via a mechanism that involves Gag ubiquitination. Post-translationally, specific enzymatic cleavages by the viral protease yield mature proteins. The protease is released by autocatalytic cleavage. The polyprotein is cleaved during and after budding, this process is termed maturation. Sumoylated; which is required for virus replication. In terms of processing, phosphorylated on serine residues.

The protein localises to the virion. Its subcellular location is the host cell membrane. It is found in the host late endosome membrane. It localises to the host endosome. The protein resides in the host multivesicular body. The protein localises to the host cytoplasm. The enzyme catalyses DNA(n) + a 2'-deoxyribonucleoside 5'-triphosphate = DNA(n+1) + diphosphate. It catalyses the reaction Endonucleolytic cleavage to 5'-phosphomonoester.. Most efficiently inhibited by Amprenavir, which is able to block Gag-Pol processing in infected cells. Functionally, plays a role in budding and is processed by the viral protease during virion maturation outside the cell. During budding, it recruits, in a PPXY-dependent or independent manner, Nedd4-like ubiquitin ligases that conjugate ubiquitin molecules to Gag-Pol, or to Gag-Pol binding host factors. Interaction with HECT ubiquitin ligases probably links the viral protein to the host ESCRT pathway and facilitates release. Targets Gag and gag-pol polyproteins to the plasma membrane via a multipartite membrane binding signal, that includes its myristoylated N-terminus. Also mediates nuclear localization of the pre-integration complex. Its function is as follows. Constituent of the pre-integration complex (PIC) which tethers the latter to mitotic chromosomes. This allows the integration of the viral genome into the host DNA. In terms of biological role, forms the spherical core of the virion that encapsulates the genomic RNA-nucleocapsid complex. Functionally, involved in the packaging and encapsidation of two copies of the genome. Binds with high affinity to conserved UCUG elements within the packaging signal, located near the 5'-end of the genome. This binding is dependent on genome dimerization. Acts as a nucleic acid chaperone which is involved in rearrangement of nucleic acid secondary structures during gRNA retrotranscription. The aspartyl protease mediates proteolytic cleavages of Gag and Gag-Pol polyproteins during or shortly after the release of the virion from the plasma membrane. Cleavages take place as an ordered, step-wise cascade to yield mature proteins. This process is called maturation. Displays maximal activity during the budding process just prior to particle release from the cell (Potential). Cleaves the translation initiation factor eIF4G leading to the inhibition of host cap-dependent translation. Its function is as follows. RT is a multifunctional enzyme that converts the viral dimeric RNA genome into dsDNA in the cytoplasm, shortly after virus entry into the cell. This enzyme displays a DNA polymerase activity that can copy either DNA or RNA templates, and a ribonuclease H (RNase H) activity that cleaves the RNA strand of RNA-DNA heteroduplexes in a partially processive 3' to 5' endonucleasic mode. Conversion of viral genomic RNA into dsDNA requires many steps. A tRNA binds to the primer-binding site (PBS) situated at the 5' end of the viral RNA. RT uses the 3' end of the tRNA primer to perform a short round of RNA-dependent minus-strand DNA synthesis. The reading proceeds through the U5 region and ends after the repeated (R) region which is present at both ends of viral RNA. The portion of the RNA-DNA heteroduplex is digested by the RNase H, resulting in a ssDNA product attached to the tRNA primer. This ssDNA/tRNA hybridizes with the identical R region situated at the 3' end of viral RNA. This template exchange, known as minus-strand DNA strong stop transfer, can be either intra- or intermolecular. RT uses the 3' end of this newly synthesized short ssDNA to perform the RNA-dependent minus-strand DNA synthesis of the whole template. RNase H digests the RNA template except for a polypurine tract (PPT) situated at the 5' end of the genome. It is not clear if both polymerase and RNase H activities are simultaneous. RNase H probably can proceed both in a polymerase-dependent (RNA cut into small fragments by the same RT performing DNA synthesis) and a polymerase-independent mode (cleavage of remaining RNA fragments by free RTs). Secondly, RT performs DNA-directed plus-strand DNA synthesis using the PPT that has not been removed by RNase H as primers. PPT and tRNA primers are then removed by RNase H. The 3' and 5' ssDNA PBS regions hybridize to form a circular dsDNA intermediate. Strand displacement synthesis by RT to the PBS and PPT ends produces a blunt ended, linear dsDNA copy of the viral genome that includes long terminal repeats (LTRs) at both ends. In terms of biological role, catalyzes viral DNA integration into the host chromosome, by performing a series of DNA cutting and joining reactions. This enzyme activity takes place after virion entry into a cell and reverse transcription of the RNA genome in dsDNA. The first step in the integration process is 3' processing. This step requires a complex comprising the viral genome, matrix protein and integrase. This complex is called the pre-integration complex (PIC). The integrase protein removes 2 nucleotides from each 3' end of the viral DNA, leaving recessed CA OH's at the 3' ends. In the second step that requires cell division, the PIC enters cell nucleus. In the third step, termed strand transfer, the integrase protein joins the previously processed 3' ends to the 5' ends of strands of target cellular DNA at the site of integration. The last step is viral DNA integration into host chromosome. The chain is Gag-Pol polyprotein (gag-pol) from Cas-Br-E murine leukemia virus.